Reading from the N-terminus, the 274-residue chain is Ribosomal RNA small subunit methyltransferase A (274 aa).

N27, L29, G54, E75, D100, and N121 together coordinate S-adenosyl-L-methionine.

This sequence belongs to the class I-like SAM-binding methyltransferase superfamily. rRNA adenine N(6)-methyltransferase family. RsmA subfamily.

It localises to the cytoplasm. The catalysed reaction is adenosine(1518)/adenosine(1519) in 16S rRNA + 4 S-adenosyl-L-methionine = N(6)-dimethyladenosine(1518)/N(6)-dimethyladenosine(1519) in 16S rRNA + 4 S-adenosyl-L-homocysteine + 4 H(+). Functionally, specifically dimethylates two adjacent adenosines (A1518 and A1519) in the loop of a conserved hairpin near the 3'-end of 16S rRNA in the 30S particle. May play a critical role in biogenesis of 30S subunits. The polypeptide is Ribosomal RNA small subunit methyltransferase A (Acinetobacter baylyi (strain ATCC 33305 / BD413 / ADP1)).